Reading from the N-terminus, the 334-residue chain is N-acetyl-S-alkylcysteine monooxygenase (334 aa).

To bacterial alkanal monooxygenase alpha and beta chains.

It catalyses the reaction N-acetyl-S-benzyl-L-cysteine + FMNH2 + O2 = (R)-N-acetyl-S-benzyl-L-cysteine sulfoxide + FMN + H2O + H(+). It carries out the reaction N-acetyl-S-methyl-L-cysteine + FMNH2 + O2 = (R)-N-acetyl-S-methyl-L-cysteine sulfoxide + FMN + H2O + H(+). Its pathway is amino-acid metabolism. Its function is as follows. Involved in a cysteine salvage pathway from S-alkylcysteine. Catalyzes the oxidation of N-acetyl-S-benzyl-L-cysteine and N-acetyl-S-methyl-L-cysteine to (R)-N-acetyl-S-benzyl-L-cysteine sulfoxide and (R)-N-acetyl-S-methyl-L-cysteine sulfoxide, respectively. This pathway is likely important in the catabolism of alkylated cysteine generated by proteolysis of alkylated glutathione formed in the detoxification of a wide range of electrophiles. In Bacillus subtilis (strain 168), this protein is N-acetyl-S-alkylcysteine monooxygenase.